The following is a 262-amino-acid chain: Ribosomal RNA small subunit methyltransferase G (262 aa).

S-adenosyl-L-methionine contacts are provided by glycine 72, leucine 77, and arginine 142. The interval 212-262 (RSSQLSRAEGRKGRGDGERHDGRQVRRTARDSRRSREVDRDQPTRGQSRST) is disordered. Residues 219–254 (AEGRKGRGDGERHDGRQVRRTARDSRRSREVDRDQP) are compositionally biased toward basic and acidic residues.

Belongs to the methyltransferase superfamily. RNA methyltransferase RsmG family.

Its subcellular location is the cytoplasm. Functionally, specifically methylates the N7 position of guanine in position 518 of 16S rRNA. The protein is Ribosomal RNA small subunit methyltransferase G of Frankia alni (strain DSM 45986 / CECT 9034 / ACN14a).